A 107-amino-acid polypeptide reads, in one-letter code: Nucleoid-associated protein PHZ_c0369 (107 aa).

It belongs to the YbaB/EbfC family. Homodimer.

It is found in the cytoplasm. The protein localises to the nucleoid. In terms of biological role, binds to DNA and alters its conformation. May be involved in regulation of gene expression, nucleoid organization and DNA protection. This Phenylobacterium zucineum (strain HLK1) protein is Nucleoid-associated protein PHZ_c0369.